Here is a 640-residue protein sequence, read N- to C-terminus: Phosphatidylinositol-binding clathrin assembly protein (640 aa).

Ser2 carries the post-translational modification N-acetylserine. Residues 14–145 (QHSVTGSAVS…VSYRQVAFDF (132 aa)) form the ENTH domain. Phosphoserine is present on residues Ser16 and Ser20. The interaction with PIMREG stretch occupies residues 221-294 (KYFDMKKNQC…LEGKKIKDST (74 aa)). A Glycyl lysine isopeptide (Lys-Gly) (interchain with G-Cter in SUMO2) cross-link involves residue Lys238. Residues Ser303 and Ser315 each carry the phosphoserine modification. The segment at 543 to 568 (NGTTKNDVSCSQPGEKKLTGGSNWQP) is disordered. Residues 544-554 (GTTKNDVSCSQ) are compositionally biased toward polar residues.

This sequence belongs to the PICALM/SNAP91 family. In terms of assembly, binds to clathrin; involves primarily the C-terminal sequences, but the full-length protein is required for full binding capacity. Binds phosphatidylinositol 4,5- bisphosphate. Interacts with PIMREG; this interaction may change the subcellular location into the nucleus. Interacts with AP2A1 (via its alpha-appendage domain). Interacts (via N-terminus) with VAMP2; VAMP3; VAMP7 and VAMP8 (Via N-terminus). Interacts with LC3/MAP1LC3A. In terms of tissue distribution, isoform 2 was found in most tissues examined. Isoform 1 has an overlapping expression pattern but is absent from lung, heart and pancreas. Both isoforms are widely expressed in the brain, higher levels are seen in hippocampus, dentate gyrus, medial habenula nucleus and cerebellar granule cells.

Its subcellular location is the cell membrane. It is found in the membrane. It localises to the clathrin-coated pit. The protein resides in the golgi apparatus. The protein localises to the cytoplasmic vesicle. Its subcellular location is the clathrin-coated vesicle. It is found in the nucleus. Functionally, cytoplasmic adapter protein that plays a critical role in clathrin-mediated endocytosis which is important in processes such as internalization of cell receptors, synaptic transmission or removal of apoptotic cells. Recruits AP-2 and attaches clathrin triskelions to the cytoplasmic side of plasma membrane leading to clathrin-coated vesicles (CCVs) assembly. Furthermore, regulates clathrin-coated vesicle size and maturation by directly sensing and driving membrane curvature. In addition to binding to clathrin, mediates the endocytosis of small R-SNARES (Soluble NSF Attachment Protein REceptors) between plasma membranes and endosomes including VAMP2, VAMP3, VAMP4, VAMP7 or VAMP8. In turn, PICALM-dependent SNARE endocytosis is required for the formation and maturation of autophagic precursors. Modulates thereby autophagy and the turnover of autophagy substrates such as MAPT/TAU or amyloid precursor protein cleaved C-terminal fragment (APP-CTF). The chain is Phosphatidylinositol-binding clathrin assembly protein (Picalm) from Rattus norvegicus (Rat).